Reading from the N-terminus, the 204-residue chain is Large ribosomal subunit protein eL15z (204 aa).

The segment at 161–204 (LRGLTSEGKKNRGLRGKGHNNHKNRPSRRATWKKNNSLSLRRYR) is disordered. Basic residues predominate over residues 171-192 (NRGLRGKGHNNHKNRPSRRATW). The segment covering 193–204 (KKNNSLSLRRYR) has biased composition (polar residues).

Belongs to the eukaryotic ribosomal protein eL15 family.

The protein is Large ribosomal subunit protein eL15z (RPL15A) of Arabidopsis thaliana (Mouse-ear cress).